A 319-amino-acid chain; its full sequence is Acetyl-coenzyme A carboxylase carboxyl transferase subunit alpha (319 aa).

In terms of domain architecture, CoA carboxyltransferase C-terminal spans 39-293 (RLQKKSNDLT…KAVLEKQLHE (255 aa)).

Belongs to the AccA family. In terms of assembly, acetyl-CoA carboxylase is a heterohexamer composed of biotin carboxyl carrier protein (AccB), biotin carboxylase (AccC) and two subunits each of ACCase subunit alpha (AccA) and ACCase subunit beta (AccD).

It localises to the cytoplasm. It catalyses the reaction N(6)-carboxybiotinyl-L-lysyl-[protein] + acetyl-CoA = N(6)-biotinyl-L-lysyl-[protein] + malonyl-CoA. It functions in the pathway lipid metabolism; malonyl-CoA biosynthesis; malonyl-CoA from acetyl-CoA: step 1/1. Functionally, component of the acetyl coenzyme A carboxylase (ACC) complex. First, biotin carboxylase catalyzes the carboxylation of biotin on its carrier protein (BCCP) and then the CO(2) group is transferred by the carboxyltransferase to acetyl-CoA to form malonyl-CoA. The polypeptide is Acetyl-coenzyme A carboxylase carboxyl transferase subunit alpha (Neisseria meningitidis serogroup A / serotype 4A (strain DSM 15465 / Z2491)).